The primary structure comprises 972 residues: Cycloisomaltooligosaccharide glucanotransferase (972 aa).

The first 38 residues, 1–38 (MVRFMYALRKRRLSLLLAMSLLVMCVASVVSPPPQALA), serve as a signal peptide directing secretion. 2 CBM6 domains span residues 421 to 546 (TRYE…LTLG) and 748 to 871 (DIYE…LDLD).

Belongs to the glycosyl hydrolase 66 family. Monomer.

The enzyme catalyses cyclizes part of a (1-&gt;6)-alpha-D-glucan chain by formation of a (1-&gt;6)-alpha-D-glucosidic bond.. In terms of biological role, produces cycloisomaltooligosaccharide from dextran containing 7, 8 or 9 glucose units. The enzyme is specific for (1-&gt;6)-alpha-D-glucans (dextrans) and, without activity toward (1-&gt;4)-alpha-D-glucans, such as amylose. It also has no activity on oligosaccharides, such as amylopectin and pullulan, containing (1-&gt;6)-alpha-D-glucosidic linkages at branch points. This Niallia circulans (Bacillus circulans) protein is Cycloisomaltooligosaccharide glucanotransferase.